We begin with the raw amino-acid sequence, 347 residues long: Protein pelota homolog (347 aa).

Belongs to the eukaryotic release factor 1 family. Pelota subfamily. Monomer. A divalent metal cation serves as cofactor.

It localises to the cytoplasm. Its function is as follows. May function in recognizing stalled ribosomes, interact with stem-loop structures in stalled mRNA molecules, and effect endonucleolytic cleavage of the mRNA. May play a role in the release non-functional ribosomes and degradation of damaged mRNAs. Has endoribonuclease activity. This is Protein pelota homolog from Methanothrix thermoacetophila (strain DSM 6194 / JCM 14653 / NBRC 101360 / PT) (Methanosaeta thermophila).